The primary structure comprises 185 residues: Ribosome-recycling factor (185 aa).

Belongs to the RRF family.

Its subcellular location is the cytoplasm. Its function is as follows. Responsible for the release of ribosomes from messenger RNA at the termination of protein biosynthesis. May increase the efficiency of translation by recycling ribosomes from one round of translation to another. In Erwinia tasmaniensis (strain DSM 17950 / CFBP 7177 / CIP 109463 / NCPPB 4357 / Et1/99), this protein is Ribosome-recycling factor.